Reading from the N-terminus, the 212-residue chain is Large ribosomal subunit protein uL3 (212 aa).

Position 153 is an N5-methylglutamine (Gln-153).

This sequence belongs to the universal ribosomal protein uL3 family. In terms of assembly, part of the 50S ribosomal subunit. Forms a cluster with proteins L14 and L19. Post-translationally, methylated by PrmB.

In terms of biological role, one of the primary rRNA binding proteins, it binds directly near the 3'-end of the 23S rRNA, where it nucleates assembly of the 50S subunit. In Shewanella woodyi (strain ATCC 51908 / MS32), this protein is Large ribosomal subunit protein uL3.